Consider the following 157-residue polypeptide: Putative electron transport protein YsaA (157 aa).

4Fe-4S ferredoxin-type domains lie at 2-32 (NRFI…NQDC), 48-80 (KDHC…REHG), 80-109 (GHIF…VVSS), and 112-144 (KARA…CMDV). Positions 12, 15, 18, 22, 58, 61, 66, 70, 89, 92, 95, 99, 118, 121, 130, and 134 each coordinate [4Fe-4S] cluster.

In Escherichia coli (strain K12), this protein is Putative electron transport protein YsaA (ysaA).